A 478-amino-acid polypeptide reads, in one-letter code: Noelin-3 (478 aa).

An N-terminal signal peptide occupies residues 1–23 (MSAPLLKLGAVLSTMAMISNWMS). 5 N-linked (GlcNAc...) asparagine glycosylation sites follow: asparagine 33, asparagine 95, asparagine 179, asparagine 299, and asparagine 465. A coiled-coil region spans residues 77–217 (CSRDAKSRQL…TRLRDCMKKL (141 aa)). An Olfactomedin-like domain is found at 218–470 (TCGKLMKITG…QVLFNVTLFH (253 aa)). Cysteine 219 and cysteine 401 form a disulfide bridge.

Peripherally associated with AMPAR complex. AMPAR complex consists of an inner core made of 4 pore-forming GluA/GRIA proteins (GRIA1, GRIA2, GRIA3 and GRIA4) and 4 major auxiliary subunits arranged in a twofold symmetry. One of the two pairs of distinct binding sites is occupied either by CNIH2, CNIH3 or CACNG2, CACNG3. The other harbors CACNG2, CACNG3, CACNG4, CACNG8 or GSG1L. This inner core of AMPAR complex is complemented by outer core constituents binding directly to the GluA/GRIA proteins at sites distinct from the interaction sites of the inner core constituents. Outer core constituents include at least PRRT1, PRRT2, CKAMP44/SHISA9, FRRS1L and NRN1. The proteins of the inner and outer core serve as a platform for other, more peripherally associated AMPAR constituents, including OLFM3. Alone or in combination, these auxiliary subunits control the gating and pharmacology of the AMPAR complex and profoundly impact their biogenesis and protein processing. Homodimer. Interacts with MYOC. Interacts with OLFM2. In terms of tissue distribution, expressed in the brain (at protein level). Also expressed in the retina, mainly in the ganglion cell layer and in the amacrine cell subregion of the inner nuclear layer. Expressed at high levels in the epithelial cells of the posterior iris and the ciliary body and, at lower levels, in the trabecular meshwork. Isoform 2 preferentially expressed in retina and brain, while isoform 1 preferentially expressed in the tissues of the eye angle.

Its subcellular location is the secreted. The protein resides in the synapse. The chain is Noelin-3 (Olfm3) from Rattus norvegicus (Rat).